A 214-amino-acid polypeptide reads, in one-letter code: Adenylate kinase (214 aa).

10–15 (GAGKGT) is an ATP binding site. The interval 30-59 (STGDMLRAAIKAGTELGLEAKRVMDEGKLV) is NMP. AMP contacts are provided by residues T31, R36, 57 to 59 (KLV), 85 to 88 (GFPR), and Q92. The LID stretch occupies residues 122–159 (GRRVHPASGRVYHVVYNPPKVEGKDNETGDDLIVRDDD). ATP contacts are provided by residues R123 and 132-133 (VY). R156 and R167 together coordinate AMP. R200 serves as a coordination point for ATP.

This sequence belongs to the adenylate kinase family. As to quaternary structure, monomer.

Its subcellular location is the cytoplasm. It carries out the reaction AMP + ATP = 2 ADP. It functions in the pathway purine metabolism; AMP biosynthesis via salvage pathway; AMP from ADP: step 1/1. Its function is as follows. Catalyzes the reversible transfer of the terminal phosphate group between ATP and AMP. Plays an important role in cellular energy homeostasis and in adenine nucleotide metabolism. This Alteromonas mediterranea (strain DSM 17117 / CIP 110805 / LMG 28347 / Deep ecotype) protein is Adenylate kinase.